The primary structure comprises 117 residues: uncharacterized protein (117 aa).

Helical transmembrane passes span 3–23 (AVPIILVFAAGLNSCIGNILL), 40–60 (FLTPGFVGGVVFYGINVLLFA), 66–86 (LEVSVAYPILAGSGFAMLIIA), and 94–114 (PFHLHKWIGVALVLVGIIFLA).

This sequence to E.coli and S.aureus ethidium bromide resistance proteins (ebr/QacC/EmrE/MvrC).

Its subcellular location is the cell membrane. This is an uncharacterized protein from Sinorhizobium fredii (strain NBRC 101917 / NGR234).